The following is a 256-amino-acid chain: MKVLIASKSDPASMQMLSYLEDNYDIKENSGRRFVKDFEIFVIEDRHIFHDMNLGNNYEYAVVLSRHSSAADIKSLTAHPTGNFGPKADLGGRPKTINVSCPKYMSGTLRQMLESYSGTKFQVTFEATHHGPIFDLPNYYVEIGTTENEWTDDDAKKTAVDAVINPDAKDFPNFVAVGGGHYAPKILEYFRRNEINIGHIISKHDHDDLEEWQIKDAVEKTPSCKGFLVDRKGTRSRVRDMVKSISDDLGLELIMI.

It belongs to the DtdA deacylase family. In terms of assembly, monomer. Zn(2+) is required as a cofactor.

The enzyme catalyses a D-aminoacyl-tRNA + H2O = a tRNA + a D-alpha-amino acid + H(+). It catalyses the reaction glycyl-tRNA(Ala) + H2O = tRNA(Ala) + glycine + H(+). Its function is as follows. D-aminoacyl-tRNA deacylase with broad substrate specificity. By recycling D-aminoacyl-tRNA to D-amino acids and free tRNA molecules, this enzyme counteracts the toxicity associated with the formation of D-aminoacyl-tRNA entities in vivo. This chain is D-aminoacyl-tRNA deacylase, found in Thermoplasma volcanium (strain ATCC 51530 / DSM 4299 / JCM 9571 / NBRC 15438 / GSS1).